The sequence spans 529 residues: Amino acid transporter heavy chain SLC3A2 (529 aa).

The disordered stretch occupies residues 1 to 20 (MSQDTEVDMKEVELNELEPE). Residues 1 to 84 (MSQDTEVDMK…SPGWVRTRWA (84 aa)) lie on the Cytoplasmic side of the membrane. Phosphoserine is present on Ser-2. Thr-5 bears the Phosphothreonine mark. Positions 7–20 (VDMKEVELNELEPE) are enriched in basic and acidic residues. Residue Lys-49 forms a Glycyl lysine isopeptide (Lys-Gly) (interchain with G-Cter in ubiquitin) linkage. Ser-65 is modified (phosphoserine). A Glycyl lysine isopeptide (Lys-Gly) (interchain with G-Cter in SUMO2) cross-link involves residue Lys-66. Residues 85–105 (LLLLFWLGWIGMLAGAVVIIV) form a helical; Signal-anchor for type II membrane protein membrane-spanning segment. Topologically, residues 106–529 (RAPRCRELPV…GLLLHFPYVA (424 aa)) are extracellular. Residue Asn-266 is glycosylated (N-linked (GlcNAc...) asparagine). Ser-307 and Ser-309 each carry phosphoserine. Residues Asn-325 and Asn-405 are each glycosylated (N-linked (GlcNAc...) asparagine). At Ser-426 the chain carries Phosphoserine.

This sequence belongs to the SLC3A transporter family. Disulfide-linked heterodimer with a non-glycosylated light chain (SLC7A5, SLC7A6, SLC7A7, SLC7A8, SLC7A10 or SLC7A11). Interacts with TLCD3A/CT120 and ICAM1. Constitutively and specifically associates with beta-1 integrins (alpha-2/beta-1, alpha-3/beta-1, alpha-5/beta-1 and alpha-6/beta-1), but minimally with alpha-4/beta-1. Interacts with LAPTM4B; recruits SLC3A2 and SLC7A5 to lysosomes to promote leucine uptake into these organelles and is required for mTORC1 activation. Phosphorylation on Ser-307 or Ser-309 and on Ser-426 by ecto-protein kinases favors heterotypic cell-cell interactions. In terms of processing, N-glycosylated; N-glycosylation is crucial for trafficking and stability of SLC3A2 to the plasma membrane.

The protein resides in the apical cell membrane. Its subcellular location is the cell membrane. It localises to the cell junction. It is found in the lysosome membrane. The protein localises to the melanosome. The protein resides in the basolateral cell membrane. Its function is as follows. Acts as a chaperone that facilitates biogenesis and trafficking of functional transporters heterodimers to the plasma membrane. Forms heterodimer with SLC7 family transporters (SLC7A5, SLC7A6, SLC7A7, SLC7A8, SLC7A10 and SLC7A11), a group of amino-acid antiporters. Heterodimers function as amino acids exchangers, the specificity of the substrate depending on the SLC7A subunit. Heterodimers formed by SLC3A2/SLC7A6 or SLC3A2/SLC7A7 mediate the uptake of dibasic amino acids. Heterodimer SLC3A2/SLC7A11 functions as an antiporter by mediating the exchange of extracellular anionic L-cystine and intracellular L-glutamate across the cellular plasma membrane. SLC3A2/SLC7A10 translocates small neutral L- and D-amino acids across the plasma membrane. SLC3A2/SLC75 or SLC3A2/SLC7A8 translocates neutral amino acids with broad specificity, thyroid hormones and L-DOPA. SLC3A2 is essential for plasma membrane localization, stability, and the transport activity of SLC7A5 and SLC7A8. When associated with LAPTM4B, the heterodimer SLC7A5 is recruited to lysosomes to promote leucine uptake into these organelles, and thereby mediates mTORC1 activation. Modulates integrin-related signaling and is essential for integrin-dependent cell spreading, migration and tumor progression. This is Amino acid transporter heavy chain SLC3A2 from Oryctolagus cuniculus (Rabbit).